Consider the following 270-residue polypeptide: Formamidopyrimidine-DNA glycosylase (270 aa).

Residue P2 is the Schiff-base intermediate with DNA of the active site. E3 functions as the Proton donor in the catalytic mechanism. K58 acts as the Proton donor; for beta-elimination activity in catalysis. Residues H91, R110, and K151 each contribute to the DNA site. Residues F236–R270 form an FPG-type zinc finger. Residue R260 is the Proton donor; for delta-elimination activity of the active site.

The protein belongs to the FPG family. In terms of assembly, monomer. Requires Zn(2+) as cofactor.

It carries out the reaction Hydrolysis of DNA containing ring-opened 7-methylguanine residues, releasing 2,6-diamino-4-hydroxy-5-(N-methyl)formamidopyrimidine.. It catalyses the reaction 2'-deoxyribonucleotide-(2'-deoxyribose 5'-phosphate)-2'-deoxyribonucleotide-DNA = a 3'-end 2'-deoxyribonucleotide-(2,3-dehydro-2,3-deoxyribose 5'-phosphate)-DNA + a 5'-end 5'-phospho-2'-deoxyribonucleoside-DNA + H(+). Functionally, involved in base excision repair of DNA damaged by oxidation or by mutagenic agents. Acts as a DNA glycosylase that recognizes and removes damaged bases. Has a preference for oxidized purines, such as 7,8-dihydro-8-oxoguanine (8-oxoG). Has AP (apurinic/apyrimidinic) lyase activity and introduces nicks in the DNA strand. Cleaves the DNA backbone by beta-delta elimination to generate a single-strand break at the site of the removed base with both 3'- and 5'-phosphates. The sequence is that of Formamidopyrimidine-DNA glycosylase from Pseudomonas savastanoi pv. phaseolicola (strain 1448A / Race 6) (Pseudomonas syringae pv. phaseolicola (strain 1448A / Race 6)).